The sequence spans 108 residues: Thioredoxin Asp f 28 (108 aa).

The Thioredoxin domain occupies 1–108 (MSHGKVIAVD…LEEMIKSISA (108 aa)). Active-site nucleophile residues include Cys33 and Cys36. Residues Cys33 and Cys36 are joined by a disulfide bond.

It belongs to the thioredoxin family.

Functionally, participates in various redox reactions through the reversible oxidation of its active center dithiol to a disulfide and catalyzes dithiol-disulfide exchange reactions. The chain is Thioredoxin Asp f 28 from Aspergillus fumigatus (Neosartorya fumigata).